The chain runs to 209 residues: FMN-dependent NADH:quinone oxidoreductase (209 aa).

FMN contacts are provided by residues serine 18, 102–105 (MYNF), and 146–149 (SRGG).

It belongs to the azoreductase type 1 family. As to quaternary structure, homodimer. It depends on FMN as a cofactor.

The enzyme catalyses 2 a quinone + NADH + H(+) = 2 a 1,4-benzosemiquinone + NAD(+). It catalyses the reaction N,N-dimethyl-1,4-phenylenediamine + anthranilate + 2 NAD(+) = 2-(4-dimethylaminophenyl)diazenylbenzoate + 2 NADH + 2 H(+). Quinone reductase that provides resistance to thiol-specific stress caused by electrophilic quinones. Functionally, also exhibits azoreductase activity. Catalyzes the reductive cleavage of the azo bond in aromatic azo compounds to the corresponding amines. The chain is FMN-dependent NADH:quinone oxidoreductase from Saccharophagus degradans (strain 2-40 / ATCC 43961 / DSM 17024).